A 91-amino-acid chain; its full sequence is Large ribosomal subunit protein uL23 (91 aa).

This sequence belongs to the universal ribosomal protein uL23 family. In terms of assembly, part of the 50S ribosomal subunit. Contacts protein L29, and trigger factor when it is bound to the ribosome.

In terms of biological role, one of the early assembly proteins it binds 23S rRNA. One of the proteins that surrounds the polypeptide exit tunnel on the outside of the ribosome. Forms the main docking site for trigger factor binding to the ribosome. This chain is Large ribosomal subunit protein uL23, found in Macrococcus caseolyticus (strain JCSC5402) (Macrococcoides caseolyticum).